The chain runs to 109 residues: Class I hydrophobin 2 (109 aa).

A signal peptide spans 1–18; it reads MQFKLAFVSIALATLAVA. Disulfide bonds link cysteine 30-cysteine 90, cysteine 37-cysteine 84, cysteine 38-cysteine 71, and cysteine 91-cysteine 104.

It belongs to the fungal hydrophobin family. In terms of assembly, self-assembles to form functional amyloid fibrils called rodlets. Self-assembly into fibrillar rodlets occurs spontaneously at hydrophobic:hydrophilic interfaces and the rodlets further associate laterally to form amphipathic monolayers.

The protein localises to the secreted. The protein resides in the cell wall. Its function is as follows. Aerial growth, conidiation, and dispersal of filamentous fungi in the environment rely upon a capability of their secreting small amphipathic proteins called hydrophobins (HPBs) with low sequence identity. Class I can self-assemble into an outermost layer of rodlet bundles on aerial cell surfaces, conferring cellular hydrophobicity that supports fungal growth, development and dispersal; whereas Class II form highly ordered films at water-air interfaces through intermolecular interactions but contribute nothing to the rodlet structure. Hyd2 is a class I hydrophobin that may allow the dikaryotic mycelia to attach to the hydrophobic surface of the substrate. Higher expression in dikaryotic mycelia than in monokaryotic mycelia indicates that dikaryons require more hyd2 hydrophobin than the monokaryons, presumably for a higher rate of hyphal growth. The polypeptide is Class I hydrophobin 2 (Lentinula edodes (Shiitake mushroom)).